A 276-amino-acid chain; its full sequence is MLMITSFANPRVAQAFVDYMATQGVILTIQQHNQSDVWLADESQAERVRAELARFLENPADPRYLAASWLAGHTGSGLHYRRYPFFAALRERAGPVTWVMMIACVVVFIAMQILGDQEVMLWLAWPFDPTLKFEFWRYFTHALMHFSLMHILFNLLWWWYLGGAVEKRLGSGKLIVITLISALLSGYVQQKFSGPWFGGLSGVVYALMGYVWLRGERDPQSGIYLQRGLIIFALIWIVAGWFDLFGMSMANGAHIAGLAVGLAMAFVDSLNARKRK.

6 helical membrane passes run 94–114 (GPVTWVMMIACVVVFIAMQIL), 142–162 (ALMHFSLMHILFNLLWWWYLG), 169–189 (LGSGKLIVITLISALLSGYVQ), 192–212 (FSGPWFGGLSGVVYALMGYVW), 229–249 (LIIFALIWIVAGWFDLFGMSM), and 250–270 (ANGAHIAGLAVGLAMAFVDSL). The active-site Nucleophile is the Ser-201. His-254 is an active-site residue.

It belongs to the peptidase S54 family.

The protein resides in the cell inner membrane. It carries out the reaction Cleaves type-1 transmembrane domains using a catalytic dyad composed of serine and histidine that are contributed by different transmembrane domains.. Functionally, rhomboid-type serine protease that catalyzes intramembrane proteolysis. This is Rhomboid protease GlpG from Shigella flexneri serotype 5b (strain 8401).